Here is a 918-residue protein sequence, read N- to C-terminus: Dual serine/threonine and tyrosine protein kinase (918 aa).

Residues 1 to 19 (MQKDGTRSSRRMEEGDRRN) show a composition bias toward basic and acidic residues. Positions 1–29 (MQKDGTRSSRRMEEGDRRNGSTGSSGSVS) are disordered. One can recognise a Protein kinase domain in the interval 643–897 (PRIGRELGRG…PLMGIVQPML (255 aa)). ATP contacts are provided by residues 649 to 657 (LGRGQYGVV) and Lys-672. Asp-768 serves as the catalytic Proton acceptor.

This sequence belongs to the protein kinase superfamily. Ser/Thr protein kinase family.

It localises to the cytoplasm. The protein resides in the cell membrane. Its subcellular location is the apical cell membrane. The protein localises to the basolateral cell membrane. It is found in the cell junction. The enzyme catalyses L-seryl-[protein] + ATP = O-phospho-L-seryl-[protein] + ADP + H(+). It carries out the reaction L-threonyl-[protein] + ATP = O-phospho-L-threonyl-[protein] + ADP + H(+). It catalyses the reaction L-tyrosyl-[protein] + ATP = O-phospho-L-tyrosyl-[protein] + ADP + H(+). May act as a positive regulator of ERK phosphorylation downstream of fibroblast growth factor-receptor activation. May induce both caspase-dependent apoptosis and caspase-independent cell death. May play a role in the embryonic development. The chain is Dual serine/threonine and tyrosine protein kinase (dstyk) from Xenopus tropicalis (Western clawed frog).